The following is a 138-amino-acid chain: Acidic phospholipase A2 BthA-1 (138 aa).

Positions 1–16 (MRTLWIMAVLLVGVEG) are cleaved as a signal peptide. Cystine bridges form between Cys-42–Cys-131, Cys-44–Cys-60, Cys-59–Cys-111, Cys-65–Cys-138, Cys-66–Cys-104, Cys-73–Cys-97, and Cys-91–Cys-102. Tyr-43, Gly-47, and Gly-48 together coordinate Ca(2+). His-63 is an active-site residue. Ca(2+) is bound at residue Asp-64. The active site involves Asp-105.

It belongs to the phospholipase A2 family. Group II subfamily. D49 sub-subfamily. Homodimer; non-covalently linked. Requires Ca(2+) as cofactor. In terms of tissue distribution, expressed by the venom gland.

The protein localises to the secreted. It carries out the reaction a 1,2-diacyl-sn-glycero-3-phosphocholine + H2O = a 1-acyl-sn-glycero-3-phosphocholine + a fatty acid + H(+). Its activity is regulated as follows. Inhibited by EDTA and bromophenacyl bromide (BPB). Functionally, snake venom phospholipase A2 (PLA2) that displays edema-inducing activities (activity that is inhibited by EDTA and dexamethasone), inhibits phospholipid-dependent collagen/ADP-induced platelet aggregation, possess hypotensive as well as anticoagulant activities. In addition, this enzyme shows bactericidal activity against E.coli and S.aureus. PLA2 catalyzes the calcium-dependent hydrolysis of the 2-acyl groups in 3-sn-phosphoglycerides. The chain is Acidic phospholipase A2 BthA-1 from Bothrops jararacussu (Jararacussu).